Here is a 488-residue protein sequence, read N- to C-terminus: Bile acid receptor (488 aa).

Lysine 133 is covalently cross-linked (Glycyl lysine isopeptide (Lys-Gly) (interchain with G-Cter in SUMO1)). A DNA-binding region (nuclear receptor) is located at residues 135-210 (DELCVVCGDR…MGMLAECMYT (76 aa)). The segment at 138 to 158 (CVVCGDRASGYHYNALTCEGC) adopts an NR C4-type zinc-finger fold. Phosphoserine; by PKC/PRKCA occurs at positions 146 and 165. Lysine 168 carries the N6-acetyllysine; by EP300 modification. The segment at 174–198 (CKNGGNCVMDMYMRRKCQECRLRKC) adopts an NR C4-type zinc-finger fold. Lysine 221 carries the post-translational modification N6-methyllysine; by SETD7. N6-acetyllysine; by EP300 is present on lysine 228. The NR LBD domain maps to 264-488 (DQQTLLDYIM…PLLCEIWDVQ (225 aa)). Lysine 291 participates in a covalent cross-link: Glycyl lysine isopeptide (Lys-Gly) (interchain with G-Cter in SUMO1). Chenodeoxycholate is bound by residues arginine 347, tyrosine 377, and tyrosine 385. Threonine 458 carries the post-translational modification Phosphothreonine; by PKC/PRKCZ. A chenodeoxycholate-binding site is contributed by histidine 463.

The protein belongs to the nuclear hormone receptor family. NR1 subfamily. In terms of assembly, heterodimer with RXRA; the heterodimerization enhances the binding affinity for LXXLL motifs from coactivators. Binds DNA predominantly as a heterodimer with RXRA. After activation by agonist binding interacts with coactivators. Interacts with PPARGC1A, SMARCA4 and EP300. Interacts with NCOA1, NCOA2, CARM1, SETD7, PRMT1, GPS2, SMARCA4 and MED1. Interacts with XRCC5 and XRCC6; decreasing NR1H4/FXR transactivation activity towards ABCB11/BSEP. Interacts with PAGR1 and NCOA6; indicative for an association with an MLL2/MLL3 complex (ASCOM). Interacts with NR5A2. In terms of processing, acetylated by EP300. Lys-228 as is the major acetylation site for EP300; the dynamicly regulated acetylation inhibits heterodimerization with RXRA and transactivation activity. Deacetylated by SIRT1. Elevated acetylation levels are found in metabolic disease states (mouse models of obesity and type II diabetes). Methylation may increase transactivation of target genes. Post-translationally, phosphorylation by PKC/PRKCA increases transactivation activity by promoting association with PPARGC1A. In terms of processing, sumoylated upon ligand binding. As to expression, expressed in liver and kidney. Expressed in pancreatic beta cells and macrophages. Expressed in the villus epithelium in adult ileum, with highest expression in the intervillus regions. Expression in colon is reduced by inflammation.

The protein resides in the nucleus. Its function is as follows. Ligand-activated transcription factor. Receptor for bile acids (BAs) such as chenodeoxycholic acid (CDCA), lithocholic acid, deoxycholic acid (DCA) and allocholic acid (ACA). Plays a essential role in BA homeostasis through the regulation of genes involved in BA synthesis, conjugation and enterohepatic circulation. Also regulates lipid and glucose homeostasis and is involved in innate immune response. The FXR-RXR heterodimer binds predominantly to farnesoid X receptor response elements (FXREs) containing two inverted repeats of the consensus sequence 5'-AGGTCA-3' in which the monomers are spaced by 1 nucleotide (IR-1) but also to tandem repeat DR1 sites with lower affinity, and can be activated by either FXR or RXR-specific ligands. It is proposed that monomeric nuclear receptors such as NR5A2/LRH-1 bound to coregulatory nuclear responsive element (NRE) halfsites located in close proximity to FXREs modulate transcriptional activity. In the liver activates transcription of the corepressor NR0B2 thereby indirectly inhibiting CYP7A1 and CYP8B1 (involved in BA synthesis) implicating at least in part histone demethylase KDM1A resulting in epigenomic repression, and SLC10A1/NTCP (involved in hepatic uptake of conjugated BAs). Activates transcription of the repressor MAFG (involved in regulation of BA synthesis). Activates transcription of SLC27A5/BACS and BAAT (involved in BA conjugation), ABCB11/BSEP (involved in bile salt export) by directly recruiting histone methyltransferase CARM1, and ABCC2/MRP2 (involved in secretion of conjugated BAs) and ABCB4 (involved in secretion of phosphatidylcholine in the small intestine). In ileal enterocytes activates FABP6/IBABP (involved in cytosolic transport), SLC51A/OSTA and SLC51B/OSTB (involved in secretion of conjugated BAs to the portal blood), and repressor NR0B2/SHP thereby indirectly inhibiting SLC10A2/ASBT (involved in BA uptake). In the intestine activates FGF15 expression and secretion leading to hepatic CYP7A1 repression; the function also involves the coordinated induction of hepatic KLB/beta-klotho expression. Transcriptional activation of FABP6/IBAP and SCD1 but not of ABCB11 is isoform-specific. Regulates transcription of liver UGT2B4 and SULT2A1 involved in BA detoxification; binding to the UGT2B4 promoter seems to imply a monomeric transactivation independent of RXRA. Modulates lipid homeostasis by activating liver NR0B2/SHP-mediated repression of SREBF1 isoform SREBP-1C (involved in de novo lipogenesis), expression of PLTP (involved in HDL formation), SCARB1 (involved in HDL hepatic uptake), APOE, APOC1, APOC4, VLDLR and SDC1 (involved in the hepatic uptake of LDL and IDL remnants), and inhibiting expression of MTTP (involved in VLDL assembly). Increases expression of APOC2 (promoting lipoprotein lipase activity implicated in triglyceride clearance). Transrepresses APOA1 probably involving a monomeric competition with NR2A1 for binding to a DR1 element. Also reduces triglyceride clearance by inhibiting expression of ANGPTL3 and APOC3 (both involved in inhibition of lipoprotein lipase). Involved in glucose homeostasis by modulating hepatic gluconeogenesis through activation of NR0B2/SHP-mediated repression of respective genes. Modulates glycogen synthesis (inducing phosphorylation of glycogen synthase kinase-3). Modulates glucose-stimulated insulin secretion and is involved in insulin resistance. Involved in intestinal innate immunity. Plays a role in protecting the distal small intestine against bacterial overgrowth and preservation of the epithelial barrier. Down-regulates inflammatory cytokine expression in several types of immune cells including macrophages and mononuclear cells. Mediates transrepression of TLR4-induced cytokine expression; the function seems to require its sumoylation and prevents N-CoR nuclear receptor corepressor clearance from target genes such as IL1B and NOS2. Involved in the TLR9-mediated protective mechanism in intestinal inflammation. Plays a anti-inflammatory role in liver inflammation; proposed to inhibit pro-inflammatory (but not antiapoptotic) NF-kappa-B signaling. In terms of biological role, activates transcription of IBAP and SDC1. The sequence is that of Bile acid receptor (Nr1h4) from Mus musculus (Mouse).